Reading from the N-terminus, the 184-residue chain is Photosystem I assembly protein Ycf4 (184 aa).

The next 2 membrane-spanning stretches (helical) occupy residues 22-42 and 57-77; these read LCWA…GTSS and ILFF…LFIS.

Belongs to the Ycf4 family.

The protein localises to the plastid. Its subcellular location is the chloroplast thylakoid membrane. Seems to be required for the assembly of the photosystem I complex. In Daucus carota (Wild carrot), this protein is Photosystem I assembly protein Ycf4.